A 693-amino-acid chain; its full sequence is E3 ubiquitin-protein ligase MARCHF7 (693 aa).

N-acetylmethionine is present on Met-1. Disordered stretches follow at residues 1 to 43, 69 to 136, 158 to 281, 296 to 342, 361 to 430, 445 to 475, and 512 to 533; these read MESK…RDSS, ESEI…LGSF, LMDY…RRTT, FFSR…EGRA, LSQN…RDSN, AANRPQASGASSSAAAGGSTPELPQGGRNPG, and WNSTDGKNDKAKSAPSRDPEKL. Polar residues-rich tracts occupy residues 14-36, 95-105, 112-132, 167-184, and 192-215; these read VQPSGSLSTRMVSGNRGTSLNDS, SCTNCASTSAG, LNTVSDSSWRHSQVPRSSSMV, DFTTSSYVQERVPSSYSQ, and AVSTLQLNSSSTNHQLPSDHQTVP. The segment covering 216–234 has biased composition (low complexity); the sequence is SSRDSSRSSFRSHFSPRQS. Residues 236-267 are compositionally biased toward polar residues; it reads SFRNSSHPAFSYFSSRNETPTISNSERGSSQR. Positions 268-279 are enriched in basic and acidic residues; that stretch reads PYRESSDNEGRR. Residues 296-305 are compositionally biased toward low complexity; the sequence is FFSRRSSQDS. Positions 306 to 323 are enriched in polar residues; the sequence is LNTRSLSSENYISPRTLT. Ser-318 is subject to Phosphoserine. Positions 324–337 are enriched in low complexity; the sequence is SQSRNNGTSSSSDV. Position 390 is a phosphoserine (Ser-390). Low complexity predominate over residues 451 to 463; it reads ASGASSSAAAGGS. Basic and acidic residues predominate over residues 517-533; that stretch reads GKNDKAKSAPSRDPEKL. The segment at 546–616 adopts an RING-CH-type zinc-finger fold; it reads DDEEEGDLCR…ELCKEKLQLN (71 aa). Cys-554, Cys-557, Cys-572, Cys-574, His-582, Cys-585, Cys-606, and Cys-609 together coordinate Zn(2+). The residue at position 688 (Thr-688) is a Phosphothreonine. Residue Ser-689 is modified to Phosphoserine.

As to expression, expressed in brain, thymus, muscle and kidney.

The protein localises to the cytoplasm. The enzyme catalyses S-ubiquitinyl-[E2 ubiquitin-conjugating enzyme]-L-cysteine + [acceptor protein]-L-lysine = [E2 ubiquitin-conjugating enzyme]-L-cysteine + N(6)-ubiquitinyl-[acceptor protein]-L-lysine.. The protein operates within protein modification; protein ubiquitination. E3 ubiquitin-protein ligase which may specifically enhance the E2 activity of HIP2. E3 ubiquitin ligases accept ubiquitin from an E2 ubiquitin-conjugating enzyme in the form of a thioester and then directly transfer the ubiquitin to targeted substrates. May be involved in T-cell proliferation by regulating LIF secretion. May play a role in lysosome homeostasis. Promotes 'Lys-6', 'Lys-11' and 'Lys-63'-linked mixed polyubiquitination on ATG14 leading to the inhibition of autophagy by impairing the interaction between ATG14 and STX7. Participates in the dopamine-mediated negative regulation of the NLRP3 inflammasome by promoting its uibiquitination and subsequent degradation. This is E3 ubiquitin-protein ligase MARCHF7 (Marchf7) from Mus musculus (Mouse).